Here is a 182-residue protein sequence, read N- to C-terminus: Large ribosomal subunit protein uL5 (182 aa).

It belongs to the universal ribosomal protein uL5 family. Part of the 50S ribosomal subunit; part of the 5S rRNA/L5/L18/L25 subcomplex. Contacts the 5S rRNA and the P site tRNA. Forms a bridge to the 30S subunit in the 70S ribosome.

Functionally, this is one of the proteins that bind and probably mediate the attachment of the 5S RNA into the large ribosomal subunit, where it forms part of the central protuberance. In the 70S ribosome it contacts protein S13 of the 30S subunit (bridge B1b), connecting the 2 subunits; this bridge is implicated in subunit movement. Contacts the P site tRNA; the 5S rRNA and some of its associated proteins might help stabilize positioning of ribosome-bound tRNAs. This is Large ribosomal subunit protein uL5 from Borrelia garinii subsp. bavariensis (strain ATCC BAA-2496 / DSM 23469 / PBi) (Borreliella bavariensis).